A 468-amino-acid polypeptide reads, in one-letter code: ATP synthase subunit beta (468 aa).

155 to 162 lines the ATP pocket; the sequence is GGAGVGKT.

It belongs to the ATPase alpha/beta chains family. F-type ATPases have 2 components, CF(1) - the catalytic core - and CF(0) - the membrane proton channel. CF(1) has five subunits: alpha(3), beta(3), gamma(1), delta(1), epsilon(1). CF(0) has three main subunits: a(1), b(2) and c(9-12). The alpha and beta chains form an alternating ring which encloses part of the gamma chain. CF(1) is attached to CF(0) by a central stalk formed by the gamma and epsilon chains, while a peripheral stalk is formed by the delta and b chains.

Its subcellular location is the cell membrane. The catalysed reaction is ATP + H2O + 4 H(+)(in) = ADP + phosphate + 5 H(+)(out). Functionally, produces ATP from ADP in the presence of a proton gradient across the membrane. The catalytic sites are hosted primarily by the beta subunits. This Enterococcus hirae (strain ATCC 9790 / DSM 20160 / JCM 8729 / LMG 6399 / NBRC 3181 / NCIMB 6459 / NCDO 1258 / NCTC 12367 / WDCM 00089 / R) protein is ATP synthase subunit beta.